Here is a 313-residue protein sequence, read N- to C-terminus: Ribosomal protein L11 methyltransferase (313 aa).

S-adenosyl-L-methionine is bound by residues Thr161, Gly182, Asp204, and Asn247.

This sequence belongs to the methyltransferase superfamily. PrmA family.

Its subcellular location is the cytoplasm. The enzyme catalyses L-lysyl-[protein] + 3 S-adenosyl-L-methionine = N(6),N(6),N(6)-trimethyl-L-lysyl-[protein] + 3 S-adenosyl-L-homocysteine + 3 H(+). Its function is as follows. Methylates ribosomal protein L11. In Alkaliphilus oremlandii (strain OhILAs) (Clostridium oremlandii (strain OhILAs)), this protein is Ribosomal protein L11 methyltransferase.